A 185-amino-acid polypeptide reads, in one-letter code: Elongation factor P (185 aa).

Belongs to the elongation factor P family.

The protein resides in the cytoplasm. It functions in the pathway protein biosynthesis; polypeptide chain elongation. Involved in peptide bond synthesis. Stimulates efficient translation and peptide-bond synthesis on native or reconstituted 70S ribosomes in vitro. Probably functions indirectly by altering the affinity of the ribosome for aminoacyl-tRNA, thus increasing their reactivity as acceptors for peptidyl transferase. The chain is Elongation factor P from Geobacillus kaustophilus (strain HTA426).